A 395-amino-acid polypeptide reads, in one-letter code: NAD(P)H-quinone oxidoreductase subunit H, chloroplastic (395 aa).

The protein belongs to the complex I 49 kDa subunit family. In terms of assembly, NDH is composed of at least 16 different subunits, 5 of which are encoded in the nucleus.

It localises to the plastid. The protein resides in the chloroplast thylakoid membrane. The enzyme catalyses a plastoquinone + NADH + (n+1) H(+)(in) = a plastoquinol + NAD(+) + n H(+)(out). It carries out the reaction a plastoquinone + NADPH + (n+1) H(+)(in) = a plastoquinol + NADP(+) + n H(+)(out). Its function is as follows. NDH shuttles electrons from NAD(P)H:plastoquinone, via FMN and iron-sulfur (Fe-S) centers, to quinones in the photosynthetic chain and possibly in a chloroplast respiratory chain. The immediate electron acceptor for the enzyme in this species is believed to be plastoquinone. Couples the redox reaction to proton translocation, and thus conserves the redox energy in a proton gradient. The protein is NAD(P)H-quinone oxidoreductase subunit H, chloroplastic of Dioscorea elephantipes (Elephant's foot yam).